Consider the following 183-residue polypeptide: Glutathione-regulated potassium-efflux system ancillary protein KefG (183 aa).

The protein belongs to the NAD(P)H dehydrogenase (quinone) family. KefG subfamily. Interacts with KefB.

The protein localises to the cell inner membrane. It catalyses the reaction a quinone + NADH + H(+) = a quinol + NAD(+). The enzyme catalyses a quinone + NADPH + H(+) = a quinol + NADP(+). In terms of biological role, regulatory subunit of a potassium efflux system that confers protection against electrophiles. Required for full activity of KefB. This chain is Glutathione-regulated potassium-efflux system ancillary protein KefG, found in Salmonella gallinarum (strain 287/91 / NCTC 13346).